A 129-amino-acid polypeptide reads, in one-letter code: Glycine cleavage system H protein (129 aa).

In terms of domain architecture, Lipoyl-binding spans 24–106 (TVVVGVTSYA…YGDGWLIKVR (83 aa)). Lysine 65 is modified (N6-lipoyllysine).

It belongs to the GcvH family. The glycine cleavage system is composed of four proteins: P, T, L and H. It depends on (R)-lipoate as a cofactor.

Its function is as follows. The glycine cleavage system catalyzes the degradation of glycine. The H protein shuttles the methylamine group of glycine from the P protein to the T protein. The protein is Glycine cleavage system H protein of Gloeobacter violaceus (strain ATCC 29082 / PCC 7421).